Consider the following 349-residue polypeptide: Ferredoxin--NADP reductase 1 (349 aa).

FAD contacts are provided by glutamate 36, lysine 44, tyrosine 48, valine 88, leucine 123, aspartate 290, and serine 331.

Belongs to the ferredoxin--NADP reductase type 2 family. In terms of assembly, homodimer. It depends on FAD as a cofactor.

The enzyme catalyses 2 reduced [2Fe-2S]-[ferredoxin] + NADP(+) + H(+) = 2 oxidized [2Fe-2S]-[ferredoxin] + NADPH. The chain is Ferredoxin--NADP reductase 1 from Lysinibacillus sphaericus (strain C3-41).